We begin with the raw amino-acid sequence, 675 residues long: Methionine--tRNA ligase (675 aa).

The 'HIGH' region signature appears at 15 to 25 (PYANGSIHLGH). The Zn(2+) site is built by cysteine 146, cysteine 149, cysteine 159, and cysteine 162. Residues 332–336 (KMSKS) carry the 'KMSKS' region motif. Lysine 335 is an ATP binding site. Residues 574–675 (DFAKLDLRIA…AGAKPGMRVK (102 aa)) form the tRNA-binding domain.

It belongs to the class-I aminoacyl-tRNA synthetase family. MetG type 1 subfamily. As to quaternary structure, homodimer. Zn(2+) serves as cofactor.

The protein resides in the cytoplasm. It carries out the reaction tRNA(Met) + L-methionine + ATP = L-methionyl-tRNA(Met) + AMP + diphosphate. Its function is as follows. Is required not only for elongation of protein synthesis but also for the initiation of all mRNA translation through initiator tRNA(fMet) aminoacylation. This is Methionine--tRNA ligase from Tolumonas auensis (strain DSM 9187 / NBRC 110442 / TA 4).